The sequence spans 193 residues: Thymidine kinase (193 aa).

ATP contacts are provided by residues G16–S23 and D89–Q92. E90 functions as the Proton acceptor in the catalytic mechanism. Residues C146, C149, C184, and C187 each coordinate Zn(2+).

It belongs to the thymidine kinase family. As to quaternary structure, homotetramer.

It localises to the cytoplasm. The catalysed reaction is thymidine + ATP = dTMP + ADP + H(+). The chain is Thymidine kinase from Thermoanaerobacter pseudethanolicus (strain ATCC 33223 / 39E) (Clostridium thermohydrosulfuricum).